The sequence spans 98 residues: Sarcosine oxidase subunit delta (98 aa).

Residues Cys6, Cys9, His59, and Cys63 each coordinate Zn(2+).

The protein belongs to the SoxD family. In terms of assembly, heterotetramer composed of subunits alpha (SoxA), beta (SoxB), gamma (SoxG) and delta (SoxD).

The protein resides in the cytoplasm. It catalyses the reaction sarcosine + (6S)-5,6,7,8-tetrahydrofolate + O2 = (6R)-5,10-methylene-5,6,7,8-tetrahydrofolate + glycine + H2O2. It carries out the reaction sarcosine + O2 + H2O = formaldehyde + glycine + H2O2. In terms of biological role, in the presence of tetrahydrofolate, catalyzes the oxidative demethylation of sarcosine to yield glycine, 5,10-methylenetetrahydrofolate and hydrogen peroxide. In the absence of tetrahydrofolate, catalyzes the oxidative demethylation of sarcosine to yield glycine, formaldehyde and hydrogen peroxide. This Corynebacterium sp. (strain P-1) protein is Sarcosine oxidase subunit delta.